The primary structure comprises 159 residues: Cyanate hydratase (159 aa).

Active-site residues include arginine 103, glutamate 106, and serine 129.

It belongs to the cyanase family.

It carries out the reaction cyanate + hydrogencarbonate + 3 H(+) = NH4(+) + 2 CO2. In terms of biological role, catalyzes the reaction of cyanate with bicarbonate to produce ammonia and carbon dioxide. The sequence is that of Cyanate hydratase from Blastomyces gilchristii (strain SLH14081) (Blastomyces dermatitidis).